The primary structure comprises 2253 residues: Genome polyprotein (2253 aa).

An intrachain disulfide couples Cys627 to Cys694. The Cell attachment site signature appears at 750–752 (RVD). The 96-residue stretch at 825 to 920 (LVYKNRGFYK…LFPGRKEITQ (96 aa)) folds into the LRAT domain. Catalysis depends on for protein 2A H-NC residues His835 and His846. Catalysis depends on Cys904, which acts as the For protein 2A H-NC; Acyl-thioester intermediate. Residues 1002–1022 (IVLYCHAPNMLTTMCLGTLLV) traverse the membrane as a helical segment. The SF3 helicase domain occupies 1205–1366 (YSEMMRVNVR…ASYSRNNKLD (162 aa)). The residue at position 1559 (Tyr1559) is an O-(5'-phospho-RNA)-tyrosine. Residues 1586-1775 (APYMQDLEHC…RAAAVHFISN (190 aa)) form the Peptidase C3 domain. Catalysis depends on for protease 3C activity residues His1626, Asp1664, and Cys1739. The Acyl-thioester intermediate role is filled by Cys1970. Residues 2018 to 2132 (PYNYGLDYSS…SVSSPLDAEY (115 aa)) form the RdRp catalytic domain. Asp2024 and Asp2118 together coordinate Mg(2+).

Belongs to the picornaviruses polyprotein family. Interacts with capsid protein VP1 and capsid protein VP3 to form heterotrimeric protomers. Five protomers subsequently associate to form pentamers which serve as building blocks for the capsid. In terms of assembly, interacts with capsid protein VP0, and capsid protein VP3 to form heterotrimeric protomers. Five protomers subsequently associate to form pentamers which serve as building blocks for the capsid. As to quaternary structure, interacts with capsid protein VP0 and capsid protein VP1 to form heterotrimeric protomers. Five protomers subsequently associate to form pentamers which serve as building blocks for the capsid. Homohexamer; forms a hexameric ring structure with 6-fold symmetry characteristic of AAA+ ATPases. In terms of assembly, homodimer. Interacts with host ACBD3. As to quaternary structure, interacts with RNA-directed RNA polymerase. Interacts with Viral protein genome-linked. Requires Mg(2+) as cofactor. VPg is uridylylated by the polymerase and is covalently linked to the 5'-end of genomic RNA. This uridylylated form acts as a nucleotide-peptide primer for the polymerase. In terms of processing, specific enzymatic cleavages yield mature proteins. All cleavages are catalyzed by P3C.

The protein resides in the virion. The protein localises to the host cytoplasm. It is found in the host nucleus. Its subcellular location is the host nucleolus. It localises to the host cytoplasmic vesicle membrane. The protein resides in the host endoplasmic reticulum membrane. The protein localises to the host Golgi apparatus membrane. It catalyses the reaction RNA(n) + a ribonucleoside 5'-triphosphate = RNA(n+1) + diphosphate. The catalysed reaction is a ribonucleoside 5'-triphosphate + H2O = a ribonucleoside 5'-diphosphate + phosphate + H(+). It carries out the reaction Selective cleavage of Gln-|-Gly bond in the poliovirus polyprotein. In other picornavirus reactions Glu may be substituted for Gln, and Ser or Thr for Gly.. Forms an icosahedral capsid of pseudo T=3 symmetry together with capsid proteins VP1 and VP3. The capsid is 300 Angstroms in diameter, composed of 60 copies of each capsid protein and enclosing the viral positive strand RNA genome. The attachment to the host cell receptor induces virion internalization predominantly through clathrin-mediated endocytosis. Binds packaging signals present in the viral RNA. Functionally, forms an icosahedral capsid of pseudo T=3 symmetry together with capsid proteins VP0 and VP1. The capsid is 300 Angstroms in diameter, composed of 60 copies of each capsid protein and enclosing the viral positive strand RNA genome. The attachment to the host cell receptor induces virion internalization predominantly through clathrin-mediated endocytosis. Binds packaging signals present in the viral RNA. Its function is as follows. Forms an icosahedral capsid of pseudo T=3 symmetry together with capsid proteins VP0 and VP3. The capsid is 300 Angstroms in diameter, composed of 60 copies of each capsid protein and enclosing the viral positive strand RNA genome. The attachment to the host cell receptor induces virion internalization predominantly through clathrin-mediated endocytosis. Binds packaging signals present in the viral RNA. In terms of biological role, mediates self-processing of the polyprotein by a translational effect termed 'ribosome skipping'. Mechanistically, 2A1-mediated cleavage occurs between the C-terminal glycine and the proline of the downstream protein 2A2. Plays an essential role in the virus replication cycle by acting as a viroporin. Creates a pore in the host endoplasmic reticulum and as a consequence releases Ca2+ in the cytoplasm of infected cell. In turn, high levels of cytoplasmic calcium may trigger membrane trafficking and transport of viral ER-associated proteins to viroplasms, sites of viral genome replication. Functionally, induces and associates with structural rearrangements of intracellular membranes. Displays RNA-binding, nucleotide binding and NTPase activities. May play a role in virion morphogenesis and viral RNA encapsidation by interacting with the capsid protein VP3. Its function is as follows. Localizes the viral replication complex to the surface of membranous vesicles. It inhibits host cell endoplasmic reticulum-to-Golgi apparatus transport and causes the disassembly of the Golgi complex, possibly through GBF1 interaction. This would result in depletion of MHC, trail receptors and IFN receptors at the host cell surface. Plays an essential role in viral RNA replication by recruiting ACBD3 and PI4KB at the viral replication sites, thereby allowing the formation of the rearranged membranous structures where viral replication takes place. In terms of biological role, acts as a primer for viral RNA replication and remains covalently bound to viral genomic RNA. VPg is uridylylated prior to priming replication into VPg-pUpU. The VPg-pUpU is then used as primer on the genomic RNA poly(A) by the RNA-dependent RNA polymerase to replicate the viral genome. Following genome release from the infecting virion in the cytoplasm, the VPg-RNA linkage is probably removed by host TDP2. During the late stage of the replication cycle, host TDP2 is excluded from sites of viral RNA synthesis and encapsidation, allowing for the generation of progeny virions. Cysteine protease that generates mature viral proteins from the precursor polyprotein. In addition to its proteolytic activity, it binds to viral RNA, and thus influences viral genome replication. RNA and substrate bind cooperatively to the protease. Functionally, replicates the viral genomic RNA on the surface of intracellular membranes. Covalently attaches UMP to a tyrosine of VPg, which is used to prime RNA synthesis. The positive stranded RNA genome is first replicated at virus induced membranous vesicles, creating a dsRNA genomic replication form. This dsRNA is then used as template to synthesize positive stranded RNA genomes. ss(+)RNA genomes are either translated, replicated or encapsidated. The protein is Genome polyprotein of Ljunganvirus 1 (LV).